Here is a 210-residue protein sequence, read N- to C-terminus: Na(+)-translocating NADH-quinone reductase subunit D (210 aa).

The next 6 helical transmembrane spans lie at 14–34 (PIVN…ALAV), 42–62 (LVMA…ISLI), 72–92 (IIVQ…LLQA), 103–123 (VFVG…AYAM), 131–151 (FMDG…VGFV), and 178–198 (NGML…IWII).

It belongs to the NqrDE/RnfAE family. In terms of assembly, composed of six subunits; NqrA, NqrB, NqrC, NqrD, NqrE and NqrF.

The protein resides in the cell inner membrane. The catalysed reaction is a ubiquinone + n Na(+)(in) + NADH + H(+) = a ubiquinol + n Na(+)(out) + NAD(+). Functionally, NQR complex catalyzes the reduction of ubiquinone-1 to ubiquinol by two successive reactions, coupled with the transport of Na(+) ions from the cytoplasm to the periplasm. NqrA to NqrE are probably involved in the second step, the conversion of ubisemiquinone to ubiquinol. The polypeptide is Na(+)-translocating NADH-quinone reductase subunit D (Shewanella putrefaciens (strain CN-32 / ATCC BAA-453)).